Reading from the N-terminus, the 139-residue chain is Putative pre-16S rRNA nuclease (139 aa).

The protein belongs to the YqgF nuclease family.

The protein resides in the cytoplasm. In terms of biological role, could be a nuclease involved in processing of the 5'-end of pre-16S rRNA. In Streptococcus pneumoniae (strain JJA), this protein is Putative pre-16S rRNA nuclease.